A 360-amino-acid chain; its full sequence is Archaemetzincin-2 (360 aa).

His254 contacts Zn(2+). The Proton acceptor role is filled by Glu255. Zn(2+)-binding residues include His258, His264, Cys265, Cys270, Cys289, and Cys292.

It belongs to the peptidase M54 family. Zn(2+) serves as cofactor.

In terms of biological role, probable zinc metalloprotease. This Macaca fascicularis (Crab-eating macaque) protein is Archaemetzincin-2 (AMZ2).